Reading from the N-terminus, the 354-residue chain is GDSL esterase/lipase At5g03820 (354 aa).

The signal sequence occupies residues 1-24; it reads MKMFIIMLMTFSVIACFYAGVGTG. Residue Ser-37 is the Nucleophile of the active site. Residues Asn-66, Asn-100, Asn-237, Asn-256, Asn-257, Asn-261, and Asn-321 are each glycosylated (N-linked (GlcNAc...) asparagine). Residues Asp-329 and His-332 contribute to the active site.

It belongs to the 'GDSL' lipolytic enzyme family.

The protein localises to the secreted. This is GDSL esterase/lipase At5g03820 from Arabidopsis thaliana (Mouse-ear cress).